Here is a 236-residue protein sequence, read N- to C-terminus: Ubiquinone biosynthesis O-methyltransferase (236 aa).

Residues Arg-39, Gly-59, Asp-80, and Met-124 each contribute to the S-adenosyl-L-methionine site.

It belongs to the methyltransferase superfamily. UbiG/COQ3 family.

The catalysed reaction is a 3-demethylubiquinol + S-adenosyl-L-methionine = a ubiquinol + S-adenosyl-L-homocysteine + H(+). It catalyses the reaction a 3-(all-trans-polyprenyl)benzene-1,2-diol + S-adenosyl-L-methionine = a 2-methoxy-6-(all-trans-polyprenyl)phenol + S-adenosyl-L-homocysteine + H(+). Its pathway is cofactor biosynthesis; ubiquinone biosynthesis. Functionally, O-methyltransferase that catalyzes the 2 O-methylation steps in the ubiquinone biosynthetic pathway. In Shewanella sp. (strain ANA-3), this protein is Ubiquinone biosynthesis O-methyltransferase.